Reading from the N-terminus, the 317-residue chain is 3',5'-bisphosphate nucleotidase (317 aa).

Residue Asp-46 is the Proton acceptor of the active site. Glu-69, Asp-118, Ile-120, and Asp-121 together coordinate Mg(2+). Thr-123 serves as the catalytic Proton acceptor. Adenosine 3',5'-bisphosphate is bound at residue Thr-123. Positions 198, 203, 227, 230, 244, 251, and 257 each coordinate AMP. Residues His-203, Ser-227, Lys-230, and Arg-244 each coordinate adenosine 3',5'-bisphosphate. Asp-257 is a binding site for Mg(2+). Asp-257 contributes to the adenosine 3',5'-bisphosphate binding site.

It belongs to the inositol monophosphatase superfamily. As to quaternary structure, monomer. The cofactor is Mg(2+).

It is found in the cytoplasm. It catalyses the reaction adenosine 3',5'-bisphosphate + H2O = AMP + phosphate. The enzyme catalyses 1D-myo-inositol 1,4-bisphosphate + H2O = 1D-myo-inositol 4-phosphate + phosphate. With respect to regulation, inhibited by Li(2+). Functionally, phosphatase that converts 3'-phosphoadenosine 5'-phosphate (PAP) to AMP. Is also able to hydrolyze inositol 1,4-bisphosphate but with less efficiency. This chain is 3',5'-bisphosphate nucleotidase, found in Entamoeba histolytica (strain ATCC 30459 / HM-1:IMSS / ABRM).